We begin with the raw amino-acid sequence, 498 residues long: Glycerol kinase (498 aa).

Thr-12 serves as a coordination point for ADP. Positions 12, 13, and 14 each coordinate ATP. A sn-glycerol 3-phosphate-binding site is contributed by Thr-12. Residue Arg-16 coordinates ADP. The sn-glycerol 3-phosphate site is built by Arg-82, Glu-83, Tyr-134, and Asp-243. The glycerol site is built by Arg-82, Glu-83, Tyr-134, Asp-243, and Gln-244. ADP contacts are provided by Thr-265 and Gly-308. Positions 265, 308, 312, and 409 each coordinate ATP. Residues Gly-409 and Asn-413 each coordinate ADP.

The protein belongs to the FGGY kinase family.

It catalyses the reaction glycerol + ATP = sn-glycerol 3-phosphate + ADP + H(+). It participates in polyol metabolism; glycerol degradation via glycerol kinase pathway; sn-glycerol 3-phosphate from glycerol: step 1/1. With respect to regulation, inhibited by fructose 1,6-bisphosphate (FBP). In terms of biological role, key enzyme in the regulation of glycerol uptake and metabolism. Catalyzes the phosphorylation of glycerol to yield sn-glycerol 3-phosphate. The polypeptide is Glycerol kinase (Petrotoga mobilis (strain DSM 10674 / SJ95)).